Here is a 232-residue protein sequence, read N- to C-terminus: Ras-related protein RabP (232 aa).

15–22 (GNYGVGKS) lines the GTP pocket. Residues 35-40 (DNTTGF) carry the Effector region motif. GTP is bound by residues 58-62 (DTSGQ) and 118-121 (NKFD). Residues cysteine 229 and cysteine 230 are each lipidated (S-geranylgeranyl cysteine).

This sequence belongs to the small GTPase superfamily. Rab family.

The protein localises to the cell membrane. The polypeptide is Ras-related protein RabP (rabP) (Dictyostelium discoideum (Social amoeba)).